Consider the following 329-residue polypeptide: uncharacterized protein (329 aa).

The SIS domain maps to 37-180 (LAEKILGHSG…AMLLFHSRGV (144 aa)). 52–57 (GVGKSG) provides a ligand contact to ATP. CBS domains follow at residues 206–265 (MFPK…GGEV) and 274–329 (MTAN…AGLL).

This sequence belongs to the SIS family. GutQ/KpsF subfamily.

This is an uncharacterized protein from Chlamydia pneumoniae (Chlamydophila pneumoniae).